Reading from the N-terminus, the 346-residue chain is Phenylalanine--tRNA ligase alpha subunit (346 aa).

E261 lines the Mg(2+) pocket.

It belongs to the class-II aminoacyl-tRNA synthetase family. Phe-tRNA synthetase alpha subunit type 1 subfamily. Tetramer of two alpha and two beta subunits. Mg(2+) serves as cofactor.

It localises to the cytoplasm. The catalysed reaction is tRNA(Phe) + L-phenylalanine + ATP = L-phenylalanyl-tRNA(Phe) + AMP + diphosphate + H(+). The chain is Phenylalanine--tRNA ligase alpha subunit from Streptococcus agalactiae serotype Ia (strain ATCC 27591 / A909 / CDC SS700).